The chain runs to 729 residues: MESLPRTPTKGRSTQHLSTPSPKNDILAMNGHKRRNTTTPPPKHTLLKPQRTDIHRHSLASQSRISMSPNRELLKNYKGTANLIYGNQKSNSGVTSFYKENVNELNRTQAILFEKKATLDLLKDELTETKEKINAVNLKFETLREEKIKIEQQLNLKNNELISIKEEFLSKKQFMNEGHEIHLKQLAASNKKELKQMENEYKTKIEKLKFMKIKQFENERASLLDKIEEVRNKITMNPSTLQEMLNDVEQKHMLEKEEWLTEYQSQWKKDIELNNKHMQEIESIKKEIENTLKPELAEKKKLLTEKRNAYEAIKVKVKEKEEETTRLRDEVALKQKTNLETLEKIKELEEYIKDTELGMKELNEILIKEETVRRTLHNELQELRGNIRVYCRIRPALKNLENSDTSLINVNEFDDNSGVQSMEVTKIQNTAQVHEFKFDKIFDQQDTNVDVFKEVGQLVQSSLDGYNVCIFAYGQTGSGKTFTMLNPGDGIIPSTISHIFNWINKLKTKGWDYKVNCEFIEIYNENIVDLLRSDNNNKEDTSIGLKHEIRHDQETKTTTITNVTSCKLESEEMVEIILKKANKLRSTASTASNEHSSRSHSIFIIHLSGSNAKTGAHSYGTLNLVDLAGSERINVSQVVGDRLRETQNINKSLSCLGDVIHALGQPDSTKRHIPFRNSKLTYLLQYSLTGDSKTLMFVNISPSSSHINETLNSLRFASKVNSTRLVSRK.

The disordered stretch occupies residues methionine 1–lysine 48. A globular region spans residues methionine 1–glutamine 109. A compositionally biased stretch (polar residues) spans lysine 10 to proline 22. Positions alanine 110–leucine 357 form a coiled coil. The ATP site is built by asparagine 386, arginine 388, arginine 392, glutamate 454, glycine 477, serine 478, glycine 479, lysine 480, threonine 481, phenylalanine 482, glutamate 554, lysine 579, and threonine 694. The Kinesin motor domain occupies asparagine 386 to threonine 723.

The protein belongs to the TRAFAC class myosin-kinesin ATPase superfamily. Kinesin family. NCD subfamily. As to quaternary structure, interacts with CIK1; the interaction is direct. Interacts with VIK1; the interaction is direct.

The protein localises to the cytoplasm. The protein resides in the cytoskeleton. It is found in the microtubule organizing center. Its subcellular location is the spindle pole body. It localises to the nucleus. The protein localises to the chromosome. The protein resides in the spindle. It carries out the reaction ATP + H2O = ADP + phosphate + H(+). It catalyses the reaction ATP + H2O + a kinesin associated with a microtubule at position (n) = ADP + phosphate + a kinesin associated with a microtubule at position (n-1, toward the minus end).. Minus end-directed microtubule (MT) motor involved in spindle midzone assembly, poleward transport of newly captured kinetochores along the lateral side of MTs, karyogamy (nuclear fusion) during mating, and with an essential function in meiosis I. Functions together with the accessory proteins CIK1 or VIK1. Drives the poleward transport of newly captured kinetochores along the lateral side of MTs, both during S-phase and during M-phase. To contribute to spindle midzone assembly during mitotic metaphase, the nuclear KAR3-CIK1 motor cross-links anti-parallel microtubules to align them on the spindle axis; as the motor travels polewards splayed microtubules are pulled into alignment. During the karyogamy (nuclear fusion) step of mating, KAR3-CIK1 cross-links antiparallel cytoplasmic microtubules emanating from the spindle pole bodies of mating partners; the motor activity of KAR3 creates the force that pulls the nuclei together by sliding cross-linked microtubules past one another. KAR3-CIK1 promotes microtubule shortening predominantly from the microtubule plus-end. Together with cytoplasmic VIK1, may act to stabilize microtubules. Requires accessory protein VIK1 for spindle pole body localization and to allow the CIN8 and KIP1 motors to generate outwardly directed spindle forces. Essential during meiosis I. The ATPase activity is stimulated by microtubule-binding. The polypeptide is Kinesin-like protein KAR3 (KAR3) (Saccharomyces cerevisiae (strain ATCC 204508 / S288c) (Baker's yeast)).